A 346-amino-acid chain; its full sequence is MDMLDPGLDPAASATAAAAASHDKGPEAEEGVELQEGGDGPGAEEQTAVAITSVQQAAFGDHNIQYQFRTETNGGQVTYRVVQVTDGQLDGQGDTAGAVSVVSTAAFAGGQQAVTQVGVDGAAQRPGPAAASVPPGPAAPFPLAVIQNPFSNGGSPAAEAVSGEARFAYFPASSVGDTTAVSVQTTDQSLQAGGQFYVMMTPQDVLQTGTQRTIAPRTHPYSPKIDGTRTPRDERRRAQHNEVERRRRDKINNWIVQLSKIIPDCNADNSKTGASKGGILSKACDYIRELRQTNQRMQETFKEAERLQMDNELLRQQIEELKNENALLRAQLQQHNLEMVGEGTRQ.

Disordered regions lie at residues 1-44 and 215-244; these read MDML…PGAE and APRT…NEVE. A compositionally biased stretch (low complexity) spans 11 to 20; the sequence is AASATAAAAA. Residues 226–244 are compositionally biased toward basic and acidic residues; it reads DGTRTPRDERRRAQHNEVE. A bHLH domain is found at 235-290; that stretch reads RRRAQHNEVERRRRDKINNWIVQLSKIIPDCNADNSKTGASKGGILSKACDYIREL. Residues 307 to 328 are leucine-zipper; the sequence is LQMDNELLRQQIEELKNENALL.

As to quaternary structure, interacts with MAF. Efficient DNA binding requires dimerization with another bHLH protein. Binds DNA as a homodimer or a heterodimer (USF1/USF2). In vivo, the USF1/USF2A heterodimer represents over 66% of the usf binding activity whereas the USF1 and USF2A homodimers represent less than 10%. The USF1/USF2B heterodimer accounted for almost 15% in some cell. As to expression, ubiquitous.

The protein localises to the nucleus. Its function is as follows. Transcription factor that binds to a symmetrical DNA sequence (E-boxes) (5'-CACGTG-3') that is found in a variety of viral and cellular promoters. This chain is Upstream stimulatory factor 2 (USF2), found in Homo sapiens (Human).